The sequence spans 337 residues: Viral cathepsin (337 aa).

An N-terminal signal peptide occupies residues 1 to 18 (MYLIYYYTIIAVATASIA). Residues 19–126 (NEKIFYDIDS…VTVAGPSART (108 aa)) constitute a propeptide, activation peptide. Disulfide bonds link C147–C188, C181–C221, and C276–C324. C150 is an active-site residue. Catalysis depends on residues H283 and N303.

It belongs to the peptidase C1 family. Synthesized as an inactive proenzyme and activated by proteolytic removal of the inhibitory propeptide.

The enzyme catalyses Endopeptidase of broad specificity, hydrolyzing substrates of both cathepsin L and cathepsin B.. Cysteine protease that plays an essential role in host liquefaction to facilitate horizontal transmission of the virus. May participate in the degradation of foreign protein expressed by the baculovirus system. The polypeptide is Viral cathepsin (VCATH) (Spodoptera litura multicapsid nucleopolyhedrovirus (SpltMNPV)).